Here is a 300-residue protein sequence, read N- to C-terminus: Protein TRACHEARY ELEMENT DIFFERENTIATION-RELATED 7A (300 aa).

The disordered stretch occupies residues methionine 1–proline 181. The Extracellular segment spans residues methionine 1–threonine 187. Residues histidine 12 to proline 181 show a composition bias toward pro residues. Asparagine 183 carries an N-linked (GlcNAc...) asparagine glycan. Residues isoleucine 188–leucine 208 traverse the membrane as a helical segment. Residues tryptophan 209–glycine 300 are Cytoplasmic-facing.

Accumulates in cells differentiating into tracheary element (TE) which undergo secondary cell wall (SCW) formation.

It is found in the cell membrane. It localises to the secreted. The protein localises to the cell wall. In terms of biological role, involved in the secondary cell wall (SCW) formation of vessel elements (e.g. protoxylem and metaxylem), thus promoting tracheary element (TE) differentiation. The polypeptide is Protein TRACHEARY ELEMENT DIFFERENTIATION-RELATED 7A (Zinnia elegans (Garden zinnia)).